Reading from the N-terminus, the 262-residue chain is Carbonic anhydrase 13 (262 aa).

Positions 4–261 (LSWGYGEHNG…LKGRRVRASF (258 aa)) constitute an Alpha-carbonic anhydrase domain. The active-site Proton donor/acceptor is His65. The Zn(2+) site is built by His95, His97, and His120. 200–201 (TV) provides a ligand contact to substrate.

This sequence belongs to the alpha-carbonic anhydrase family. Zn(2+) is required as a cofactor. Expressed in spleen, lung, kidney, heart, brain, skeletal muscle and testis.

The catalysed reaction is hydrogencarbonate + H(+) = CO2 + H2O. With respect to regulation, inhibited by coumarins, sulfonamide derivatives such as acetazolamide (AZA) and Foscarnet (phosphonoformate trisodium salt). In terms of biological role, reversible hydration of carbon dioxide. The polypeptide is Carbonic anhydrase 13 (Ca13) (Mus musculus (Mouse)).